A 292-amino-acid polypeptide reads, in one-letter code: MHRSQPLPPPELRDCPAPAKLNLFLHVTGRRADGYHTLQTVFQLVDWCDTLHFRRRDDGVVARVTDVPGVPAETDLVVRAARALQAATGATFGADIAIDKVLPMGGGIGGGSSDAATTLLALNHLWGLGLARAELMRIGLALGADVPVFVLGQNAFAQGIGEDLTPVELPESWFVVIHPKQHVPTAEIFSDECLTRDTPLSIIAVFAARTNKFDFGRNDLEPIATAKFGEVARALAWLKQHNQHARMTGSGACVFARFPDAATAQQVLERLPPEWDGRCVRSLARHPLAALA.

Lys20 is a catalytic residue. 103 to 113 (PMGGGIGGGSS) contributes to the ATP binding site. Asp145 is an active-site residue.

Belongs to the GHMP kinase family. IspE subfamily.

It catalyses the reaction 4-CDP-2-C-methyl-D-erythritol + ATP = 4-CDP-2-C-methyl-D-erythritol 2-phosphate + ADP + H(+). The protein operates within isoprenoid biosynthesis; isopentenyl diphosphate biosynthesis via DXP pathway; isopentenyl diphosphate from 1-deoxy-D-xylulose 5-phosphate: step 3/6. Functionally, catalyzes the phosphorylation of the position 2 hydroxy group of 4-diphosphocytidyl-2C-methyl-D-erythritol. In Cupriavidus necator (strain ATCC 17699 / DSM 428 / KCTC 22496 / NCIMB 10442 / H16 / Stanier 337) (Ralstonia eutropha), this protein is 4-diphosphocytidyl-2-C-methyl-D-erythritol kinase.